The chain runs to 151 residues: Ribosome-binding factor A (151 aa).

A disordered region spans residues 120 to 151 (RSPKVVRDLDDTSSDDTSPDANTDTDKETDAE).

This sequence belongs to the RbfA family. Monomer. Binds 30S ribosomal subunits, but not 50S ribosomal subunits or 70S ribosomes.

It localises to the cytoplasm. One of several proteins that assist in the late maturation steps of the functional core of the 30S ribosomal subunit. Associates with free 30S ribosomal subunits (but not with 30S subunits that are part of 70S ribosomes or polysomes). Required for efficient processing of 16S rRNA. May interact with the 5'-terminal helix region of 16S rRNA. This chain is Ribosome-binding factor A, found in Xanthobacter autotrophicus (strain ATCC BAA-1158 / Py2).